The chain runs to 149 residues: D-aminoacyl-tRNA deacylase (149 aa).

The short motif at 137–138 (GP) is the Gly-cisPro motif, important for rejection of L-amino acids element.

This sequence belongs to the DTD family. Homodimer.

The protein resides in the cytoplasm. It catalyses the reaction glycyl-tRNA(Ala) + H2O = tRNA(Ala) + glycine + H(+). The catalysed reaction is a D-aminoacyl-tRNA + H2O = a tRNA + a D-alpha-amino acid + H(+). In terms of biological role, an aminoacyl-tRNA editing enzyme that deacylates mischarged D-aminoacyl-tRNAs. Also deacylates mischarged glycyl-tRNA(Ala), protecting cells against glycine mischarging by AlaRS. Acts via tRNA-based rather than protein-based catalysis; rejects L-amino acids rather than detecting D-amino acids in the active site. By recycling D-aminoacyl-tRNA to D-amino acids and free tRNA molecules, this enzyme counteracts the toxicity associated with the formation of D-aminoacyl-tRNA entities in vivo and helps enforce protein L-homochirality. The chain is D-aminoacyl-tRNA deacylase from Syntrophotalea carbinolica (strain DSM 2380 / NBRC 103641 / GraBd1) (Pelobacter carbinolicus).